A 434-amino-acid polypeptide reads, in one-letter code: Eukaryotic translation initiation factor 3 subunit E-2 (434 aa).

Residues 219–392 (FFNHPKGRDL…GHVVMGTQPL (174 aa)) form the PCI domain.

The protein belongs to the eIF-3 subunit E family. In terms of assembly, component of the eukaryotic translation initiation factor 3 (eIF-3) complex. The eIF-3 complex interacts with pix. Interacts with mxt.

It is found in the cytoplasm. Its function is as follows. Component of the eukaryotic translation initiation factor 3 (eIF-3) complex, which is involved in protein synthesis of a specialized repertoire of mRNAs and, together with other initiation factors, stimulates binding of mRNA and methionyl-tRNAi to the 40S ribosome. The eIF-3 complex specifically targets and initiates translation of a subset of mRNAs involved in cell proliferation. This Drosophila willistoni (Fruit fly) protein is Eukaryotic translation initiation factor 3 subunit E-2 (eIF3-S6-2).